The sequence spans 331 residues: 6-phosphogluconolactonase (331 aa).

Position 287 is an N6-acetyllysine (K287).

The protein belongs to the cycloisomerase 2 family.

The enzyme catalyses 6-phospho-D-glucono-1,5-lactone + H2O = 6-phospho-D-gluconate + H(+). Its pathway is carbohydrate degradation; pentose phosphate pathway; D-ribulose 5-phosphate from D-glucose 6-phosphate (oxidative stage): step 2/3. In terms of biological role, catalyzes the hydrolysis of 6-phosphogluconolactone to 6-phosphogluconate. The chain is 6-phosphogluconolactonase from Shigella boydii serotype 18 (strain CDC 3083-94 / BS512).